The chain runs to 339 residues: Protein FAM50A (339 aa).

Positions 1-31 are disordered; sequence MAQYKGAASEAGRAMHLMKKREKQREQMEQM. Ala2 is modified (N-acetylalanine). Lys100 participates in a covalent cross-link: Glycyl lysine isopeptide (Lys-Gly) (interchain with G-Cter in SUMO2). Positions 150 to 177 are disordered; sequence TTKKKKLGKNPDVDTSFLPDRDREEEEN. The Nuclear localization signal motif lies at 152 to 155; that stretch reads KKKK. A compositionally biased stretch (basic and acidic residues) spans 168–177; sequence PDRDREEEEN.

Belongs to the FAM50 family. In terms of assembly, interacts with EFTUD2, a component of the spliceosome U5 complex. Interacts with DDX41, a component of the spliceosome C complex. In terms of tissue distribution, widely expressed in embryonic and adult tissues.

It localises to the nucleus. Probably involved in the regulation of pre-mRNA splicing. The polypeptide is Protein FAM50A (Fam50a) (Mus musculus (Mouse)).